The primary structure comprises 284 residues: Undecaprenyl-diphosphatase 2 (284 aa).

7 helical membrane-spanning segments follow: residues 6 to 26 (VIFI…EFIP), 46 to 66 (FAEM…VVLY), 94 to 114 (FGMN…LFYD), 119 to 139 (LFNL…LLVV), 183 to 203 (IMGG…SFFL), 227 to 247 (TLWI…IIVM), and 262 to 282 (FAVY…TNII).

The protein belongs to the UppP family.

The protein resides in the cell membrane. It carries out the reaction di-trans,octa-cis-undecaprenyl diphosphate + H2O = di-trans,octa-cis-undecaprenyl phosphate + phosphate + H(+). Functionally, catalyzes the dephosphorylation of undecaprenyl diphosphate (UPP). Confers resistance to bacitracin. This chain is Undecaprenyl-diphosphatase 2, found in Clostridioides difficile (strain 630) (Peptoclostridium difficile).